Consider the following 149-residue polypeptide: D-aminoacyl-tRNA deacylase (149 aa).

The short motif at 137–138 (GP) is the Gly-cisPro motif, important for rejection of L-amino acids element.

It belongs to the DTD family. As to quaternary structure, homodimer.

Its subcellular location is the cytoplasm. It catalyses the reaction glycyl-tRNA(Ala) + H2O = tRNA(Ala) + glycine + H(+). It carries out the reaction a D-aminoacyl-tRNA + H2O = a tRNA + a D-alpha-amino acid + H(+). An aminoacyl-tRNA editing enzyme that deacylates mischarged D-aminoacyl-tRNAs. Also deacylates mischarged glycyl-tRNA(Ala), protecting cells against glycine mischarging by AlaRS. Acts via tRNA-based rather than protein-based catalysis; rejects L-amino acids rather than detecting D-amino acids in the active site. By recycling D-aminoacyl-tRNA to D-amino acids and free tRNA molecules, this enzyme counteracts the toxicity associated with the formation of D-aminoacyl-tRNA entities in vivo and helps enforce protein L-homochirality. The polypeptide is D-aminoacyl-tRNA deacylase (Clostridium botulinum (strain Alaska E43 / Type E3)).